A 765-amino-acid chain; its full sequence is 5-methyltetrahydropteroyltriglutamate--homocysteine methyltransferase (765 aa).

Residues 16-19 (RELK) and Lys121 contribute to the 5-methyltetrahydropteroyltri-L-glutamate site. L-homocysteine is bound by residues 441-443 (IGS) and Glu494. L-methionine contacts are provided by residues 441 to 443 (IGS) and Glu494. 5-methyltetrahydropteroyltri-L-glutamate contacts are provided by residues 525 to 526 (RC) and Trp571. L-homocysteine is bound at residue Asp609. Position 609 (Asp609) interacts with L-methionine. Glu615 lines the 5-methyltetrahydropteroyltri-L-glutamate pocket. Residues His651, Cys653, and Glu675 each coordinate Zn(2+). Catalysis depends on His704, which acts as the Proton donor. Zn(2+) is bound at residue Cys736.

The protein belongs to the vitamin-B12 independent methionine synthase family. It depends on Zn(2+) as a cofactor.

The catalysed reaction is 5-methyltetrahydropteroyltri-L-glutamate + L-homocysteine = tetrahydropteroyltri-L-glutamate + L-methionine. Its pathway is amino-acid biosynthesis; L-methionine biosynthesis via de novo pathway; L-methionine from L-homocysteine (MetE route): step 1/1. Its function is as follows. Catalyzes the transfer of a methyl group from 5-methyltetrahydrofolate to homocysteine resulting in methionine formation. This chain is 5-methyltetrahydropteroyltriglutamate--homocysteine methyltransferase, found in Saccharophagus degradans (strain 2-40 / ATCC 43961 / DSM 17024).